Reading from the N-terminus, the 456-residue chain is N(6)-adenosine-methyltransferase non-catalytic subunit METTL14 (456 aa).

Residues 43-74 (EIAETRETSRASYDTSAAVSKRKLPEEGKADE) are disordered. The span at 65 to 74 (KLPEEGKADE) shows a compositional bias: basic and acidic residues. Interaction with METTL3 stretches follow at residues 135-136 (RD) and 237-238 (SG). A positively charged region required for RNA-binding region spans residues 245–254 (RMCLRKWGFR). Interaction with METTL3 regions lie at residues 255 to 258 (RSED) and 278 to 287 (KAIFQRTKEH). A positively charged region required for RNA-binding region spans residues 297 to 298 (HR). Residues 308–312 (NVDID) form an interaction with METTL3 region. Residues 395–456 (LRPKTPPPKS…GPHRGVFAPR (62 aa)) form a disordered region. Over residues 410–421 (ASRGGGRGGASA) the composition is skewed to gly residues. Basic and acidic residues predominate over residues 423-441 (RGERGRERNRGSFRGDRGN).

The protein belongs to the MT-A70-like family. In terms of assembly, heterodimer; heterodimerizes with mettl3 to form an antiparallel heterodimer that constitutes an active methyltransferase. Component of the WMM complex, a N6-methyltransferase complex composed of a catalytic subcomplex, named MAC, and of an associated subcomplex, named MACOM. The MAC subcomplex is composed of mettl3 and mettl14.

The protein localises to the nucleus. Its function is as follows. The METTL3-METTL14 heterodimer forms a N6-methyltransferase complex that methylates adenosine residues at the N(6) position of some mRNAs and regulates the circadian clock, differentiation of embryonic stem cells and cortical neurogenesis. In the heterodimer formed with mettl3, mettl14 constitutes the RNA-binding scaffold that recognizes the substrate rather than the catalytic core. N6-methyladenosine (m6A), which takes place at the 5'-[AG]GAC-3' consensus sites of some mRNAs, plays a role in mRNA stability and processing. This Xenopus laevis (African clawed frog) protein is N(6)-adenosine-methyltransferase non-catalytic subunit METTL14 (mettl14).